Here is a 335-residue protein sequence, read N- to C-terminus: Dihydroorotate dehydrogenase (quinone) (335 aa).

Residues 58–62 and Thr82 contribute to the FMN site; that span reads AGADK. Lys62 serves as a coordination point for substrate. A substrate-binding site is contributed by 107–111; it reads NRNGF. Positions 135 and 168 each coordinate FMN. A substrate-binding site is contributed by Asn168. Ser171 (nucleophile) is an active-site residue. Asn173 serves as a coordination point for substrate. Residues Lys213 and Gly241 each contribute to the FMN site. Position 242–243 (242–243) interacts with substrate; the sequence is NT. FMN contacts are provided by residues Gly264, Gly293, and 314–315; that span reads YS.

The protein belongs to the dihydroorotate dehydrogenase family. Type 2 subfamily. As to quaternary structure, monomer. FMN is required as a cofactor.

Its subcellular location is the cell membrane. It catalyses the reaction (S)-dihydroorotate + a quinone = orotate + a quinol. It participates in pyrimidine metabolism; UMP biosynthesis via de novo pathway; orotate from (S)-dihydroorotate (quinone route): step 1/1. Its function is as follows. Catalyzes the conversion of dihydroorotate to orotate with quinone as electron acceptor. This is Dihydroorotate dehydrogenase (quinone) from Actinobacillus pleuropneumoniae serotype 7 (strain AP76).